A 218-amino-acid polypeptide reads, in one-letter code: 3-dehydroquinate dehydratase (218 aa).

3-dehydroquinate contacts are provided by residues 29 to 31 (EFR) and Arg56. The active-site Proton donor/acceptor is the His116. Lys142 functions as the Schiff-base intermediate with substrate in the catalytic mechanism. 3-dehydroquinate contacts are provided by Arg180, Ser200, and Gln204.

This sequence belongs to the type-I 3-dehydroquinase family. Homodimer.

The enzyme catalyses 3-dehydroquinate = 3-dehydroshikimate + H2O. Its pathway is metabolic intermediate biosynthesis; chorismate biosynthesis; chorismate from D-erythrose 4-phosphate and phosphoenolpyruvate: step 3/7. Functionally, involved in the third step of the chorismate pathway, which leads to the biosynthesis of aromatic amino acids. Catalyzes the cis-dehydration of 3-dehydroquinate (DHQ) and introduces the first double bond of the aromatic ring to yield 3-dehydroshikimate. The sequence is that of 3-dehydroquinate dehydratase from Methanococcus maripaludis (strain C7 / ATCC BAA-1331).